Consider the following 106-residue polypeptide: ATP-dependent Clp protease adapter protein ClpS (106 aa).

The segment at methionine 1–leucine 22 is disordered. The segment covering lysine 9 to glutamine 20 has biased composition (basic and acidic residues).

The protein belongs to the ClpS family. Binds to the N-terminal domain of the chaperone ClpA.

Its function is as follows. Involved in the modulation of the specificity of the ClpAP-mediated ATP-dependent protein degradation. This chain is ATP-dependent Clp protease adapter protein ClpS, found in Photorhabdus laumondii subsp. laumondii (strain DSM 15139 / CIP 105565 / TT01) (Photorhabdus luminescens subsp. laumondii).